A 414-amino-acid polypeptide reads, in one-letter code: Gamma-glutamyl phosphate reductase (414 aa).

This sequence belongs to the gamma-glutamyl phosphate reductase family.

The protein resides in the cytoplasm. The catalysed reaction is L-glutamate 5-semialdehyde + phosphate + NADP(+) = L-glutamyl 5-phosphate + NADPH + H(+). It functions in the pathway amino-acid biosynthesis; L-proline biosynthesis; L-glutamate 5-semialdehyde from L-glutamate: step 2/2. In terms of biological role, catalyzes the NADPH-dependent reduction of L-glutamate 5-phosphate into L-glutamate 5-semialdehyde and phosphate. The product spontaneously undergoes cyclization to form 1-pyrroline-5-carboxylate. The chain is Gamma-glutamyl phosphate reductase from Clostridium botulinum (strain Eklund 17B / Type B).